The following is a 160-amino-acid chain: SsrA-binding protein (160 aa).

Residues 132–160 (KIHDKRDDMQKKDAQQEIARALKSSNRYE) form a disordered region. Over residues 135 to 146 (DKRDDMQKKDAQ) the composition is skewed to basic and acidic residues.

Belongs to the SmpB family.

Its subcellular location is the cytoplasm. Functionally, required for rescue of stalled ribosomes mediated by trans-translation. Binds to transfer-messenger RNA (tmRNA), required for stable association of tmRNA with ribosomes. tmRNA and SmpB together mimic tRNA shape, replacing the anticodon stem-loop with SmpB. tmRNA is encoded by the ssrA gene; the 2 termini fold to resemble tRNA(Ala) and it encodes a 'tag peptide', a short internal open reading frame. During trans-translation Ala-aminoacylated tmRNA acts like a tRNA, entering the A-site of stalled ribosomes, displacing the stalled mRNA. The ribosome then switches to translate the ORF on the tmRNA; the nascent peptide is terminated with the 'tag peptide' encoded by the tmRNA and targeted for degradation. The ribosome is freed to recommence translation, which seems to be the essential function of trans-translation. The protein is SsrA-binding protein of Leptospira borgpetersenii serovar Hardjo-bovis (strain JB197).